We begin with the raw amino-acid sequence, 201 residues long: Small ribosomal subunit protein uS4 (201 aa).

The segment at 26-45 is disordered; that stretch reads FEKRNYPPGQHGNNRRRGKK. The S4 RNA-binding domain occupies 93–153; sequence SRLDNVVYRM…EKSKSLAVVQ (61 aa).

The protein belongs to the universal ribosomal protein uS4 family. As to quaternary structure, part of the 30S ribosomal subunit. Contacts protein S5. The interaction surface between S4 and S5 is involved in control of translational fidelity.

Functionally, one of the primary rRNA binding proteins, it binds directly to 16S rRNA where it nucleates assembly of the body of the 30S subunit. With S5 and S12 plays an important role in translational accuracy. The protein is Small ribosomal subunit protein uS4 of Christiangramia forsetii (strain DSM 17595 / CGMCC 1.15422 / KT0803) (Gramella forsetii).